The chain runs to 182 residues: Adenine phosphoribosyltransferase (182 aa).

The protein belongs to the purine/pyrimidine phosphoribosyltransferase family. Homodimer.

It localises to the cytoplasm. The enzyme catalyses AMP + diphosphate = 5-phospho-alpha-D-ribose 1-diphosphate + adenine. The protein operates within purine metabolism; AMP biosynthesis via salvage pathway; AMP from adenine: step 1/1. Catalyzes a salvage reaction resulting in the formation of AMP, that is energically less costly than de novo synthesis. The sequence is that of Adenine phosphoribosyltransferase from Shewanella frigidimarina (strain NCIMB 400).